Here is a 351-residue protein sequence, read N- to C-terminus: Cytoplasmic dynein 2 light intermediate chain 1 (351 aa).

The disordered stretch occupies residues 303-335 (GTLKAVQDPARDPQYAESEVDEMRVQKDQELEH). The span at 323-335 (DEMRVQKDQELEH) shows a compositional bias: basic and acidic residues.

It belongs to the dynein light intermediate chain family. Light intermediate chain of the cytoplasmic dynein complex 2, a multisubunit complex composed at least of eleven different proteins. The cytoplasmic dynein 2 complex consists of two catalytic heavy chains (HCs) and a number of non-catalytic subunits presented by intermediate chains (ICs), light intermediate chains (LICs) and light chains (LCs). Among them, a heavy chain (DYNC2H1), two intermediate chains (DYNC2I2 and DYNC2I1), a light intermediate chain (DYNC2LI1), and a light chain (DYNLT2B) are unique to the dynein-2 complex, but a subset of light chains are also shared by dynein-1 and dynein-2 complexes. Dynein-2 complex is built around two copies of cytoplasmic dynein 2 heavy chain 1 (DYNC2H1). The C-terminal region forms the motor domain, which converts the energy from ATP hydrolysis into movement. Its N-terminal region forms the tail, an extended structure that binds the other subunits and holds the two heavy chains in a homodimer. Interacts with DYNC2H1 (via N-terminus); this interaction stabilizes the dynein-2 complex structure. In terms of tissue distribution, specifically expressed by ciliated cells in brain, lung, spleen, testis and kidney (at protein level). Enriched in the ependymal layer lining the lateral ventricles (at protein level).

Its subcellular location is the cytoplasm. It is found in the cell projection. The protein localises to the cilium. It localises to the cytoskeleton. The protein resides in the cilium basal body. Its subcellular location is the cilium axoneme. It is found in the microtubule organizing center. The protein localises to the centrosome. Acts as one of several non-catalytic accessory components of the cytoplasmic dynein 2 complex (dynein-2 complex), a motor protein complex that drives the movement of cargos along microtubules within cilia and flagella in concert with the intraflagellar transport (IFT) system, facilitating the assembly of these organelles. Involved in the regulation of ciliary length. The chain is Cytoplasmic dynein 2 light intermediate chain 1 (Dync2li1) from Mus musculus (Mouse).